Here is a 132-residue protein sequence, read N- to C-terminus: ATP synthase epsilon chain (132 aa).

Belongs to the ATPase epsilon chain family. As to quaternary structure, F-type ATPases have 2 components, CF(1) - the catalytic core - and CF(0) - the membrane proton channel. CF(1) has five subunits: alpha(3), beta(3), gamma(1), delta(1), epsilon(1). CF(0) has three main subunits: a, b and c.

The protein localises to the cell membrane. Produces ATP from ADP in the presence of a proton gradient across the membrane. This is ATP synthase epsilon chain from Bacillus velezensis (strain DSM 23117 / BGSC 10A6 / LMG 26770 / FZB42) (Bacillus amyloliquefaciens subsp. plantarum).